The primary structure comprises 429 residues: Enolase (429 aa).

A (2R)-2-phosphoglycerate-binding site is contributed by glutamine 166. Glutamate 208 functions as the Proton donor in the catalytic mechanism. Mg(2+) contacts are provided by aspartate 245, glutamate 289, and aspartate 316. Residues lysine 341, arginine 370, serine 371, and lysine 392 each contribute to the (2R)-2-phosphoglycerate site. The Proton acceptor role is filled by lysine 341.

It belongs to the enolase family. Component of the RNA degradosome, a multiprotein complex involved in RNA processing and mRNA degradation. Mg(2+) is required as a cofactor.

It localises to the cytoplasm. It is found in the secreted. The protein localises to the cell surface. It catalyses the reaction (2R)-2-phosphoglycerate = phosphoenolpyruvate + H2O. It functions in the pathway carbohydrate degradation; glycolysis; pyruvate from D-glyceraldehyde 3-phosphate: step 4/5. In terms of biological role, catalyzes the reversible conversion of 2-phosphoglycerate (2-PG) into phosphoenolpyruvate (PEP). It is essential for the degradation of carbohydrates via glycolysis. The sequence is that of Enolase from Acinetobacter baumannii (strain AB307-0294).